Here is a 64-residue protein sequence, read N- to C-terminus: Large ribosomal subunit protein bL35 (64 aa).

Disordered regions lie at residues 1–22 (MPKA…TGKI) and 34–64 (EHKP…LLNG). Residues 34–46 (EHKPTTRTRRLEG) are compositionally biased toward basic and acidic residues. A compositionally biased stretch (polar residues) spans 50–64 (VSANDTKRVNSLLNG).

It belongs to the bacterial ribosomal protein bL35 family.

In Mycolicibacterium paratuberculosis (strain ATCC BAA-968 / K-10) (Mycobacterium paratuberculosis), this protein is Large ribosomal subunit protein bL35.